A 97-amino-acid chain; its full sequence is Gibberellin-regulated protein 5 (97 aa).

The N-terminal stretch at Met-1–Ala-27 is a signal peptide.

Belongs to the GASA family. Post-translationally, six disulfide bonds may be present. In terms of tissue distribution, expressed in roots, root hairs, vasculature of cotyledons and hypocotyls, shoot apex, leaf veins, stems, flower receptacles, pollen, filaments, anthers and siliques.

It is found in the secreted. It localises to the cell wall. The protein resides in the extracellular space. Its subcellular location is the extracellular matrix. Functionally, gibberellin-regulated protein that acts as a negative regulator of gibberellin-induced flowering and stem growth. May inhibit flowering and inflorescence growth via a pathway involving GAI and by enhancing FLC expression and repressing FT and LFY. Acts as a negative regulator in thermotolerance by resogulating both salicylic acid (SA) signaling and heat shock-protein accumulation. This is Gibberellin-regulated protein 5 (GASA5) from Arabidopsis thaliana (Mouse-ear cress).